A 187-amino-acid polypeptide reads, in one-letter code: Peptide deformylase (187 aa).

2 residues coordinate Fe cation: cysteine 94 and histidine 136. Glutamate 137 is a catalytic residue. Position 140 (histidine 140) interacts with Fe cation.

It belongs to the polypeptide deformylase family. Requires Fe(2+) as cofactor.

It carries out the reaction N-terminal N-formyl-L-methionyl-[peptide] + H2O = N-terminal L-methionyl-[peptide] + formate. Its function is as follows. Removes the formyl group from the N-terminal Met of newly synthesized proteins. Requires at least a dipeptide for an efficient rate of reaction. N-terminal L-methionine is a prerequisite for activity but the enzyme has broad specificity at other positions. The protein is Peptide deformylase of Chlorobaculum tepidum (strain ATCC 49652 / DSM 12025 / NBRC 103806 / TLS) (Chlorobium tepidum).